The chain runs to 821 residues: MVSSVLEVSYVFCCPNRARGALSWNSGPGGLLAFGTSCSVVLYDPQKKVVITNLNGHTARVNCLHWIRTEDGSPSTELVSGASDNRVIHWELENNQVLKSVRLQGHEGPVYAVHGIYQSGPSDGEQHALIASAASDSTVRLWSKKGSEVKCLQILKFGDGFVLTVCLSTLPDTDAPVLACGDDGGRIHLFVQQDDWFQKMLSLCGHEDWIRGVEWATFGRDLFLASCSQDCLIRIWRLYMKPTSLETEDGSIRLKENTFTIKDGGVSTTVAVILETVLAGHENWVNAIHWQPSFYKDGVLHQPVRLLSASMDKTMILWAPDEESGVWLEQVRVGEVGGNTLGFYGCQFGENGSMIIAHAFHGAMHLWKQSTVNPRQWAPEIVISGHFDGVQDLIWDPEGEFIITTSTDQTTRLFAPWKKKNQSQVTWHEIARPQIHGYNLKCLAMIDRFQFVSGADEKVLRVFSAPRNFVENFSVISRQSLSHMLYDEDNDLPEGATVPALGLSNKAVFEGDMTYLTSEEEELLSPAFGYPQVIFQPAVLSEPPTEDHLLQNTLWPEVQKLYGHGYEIFCVTCNNSKTLLASACKAAQKEHAAIILWSTTSWKQVQSLAYHTLTVTQMAFSPDDKFLLAVSRDRTWSLWKRQDVTSAEFDPFFSLFAFTNKITSVHSRIIWSCDWSPDSKYFFTGSRDKKVVVWGECNSSYNPMEHPINPCSSILDVGSCVTAVSVCPVLNPAQRYIVAVGLESGKICIYSWSKTNQETKDWTSCVETTPSQSHTLGIRRLCWKSCSGSTEQSEEGTEWLDFASCGEDHTVKIYRVNRCAL.

WD repeat units lie at residues 56–100 (GHTA…VLKS), 105–152 (GHEG…VKCL), 160–200 (GFVL…FQKM), 205–246 (GHED…TSLE), 280–328 (GHEN…GVWL), 338–377 (GNTL…PRQW), 385–424 (GHFD…NQSQ), 435–473 (IHGY…VENF), 563–607 (GHGY…QVQS), 610–649 (YHTL…SAEF), 665–704 (VHSR…YNPM), 716–760 (DVGS…QETK), and 773–821 (SHTL…RCAL).

The protein belongs to the WD repeat ELP2 family. Component of the elongator complex which consists of ELP1, ELP2, ELP3, ELP4, ELP5 and ELP6. Interacts with STAT3 and JAKs.

It localises to the cytoplasm. The protein resides in the nucleus. It functions in the pathway tRNA modification; 5-methoxycarbonylmethyl-2-thiouridine-tRNA biosynthesis. In terms of biological role, component of the elongator complex which is required for multiple tRNA modifications, including mcm5U (5-methoxycarbonylmethyl uridine), mcm5s2U (5-methoxycarbonylmethyl-2-thiouridine), and ncm5U (5-carbamoylmethyl uridine). The elongator complex catalyzes the formation of carboxymethyluridine in the wobble base at position 34 in tRNAs. The polypeptide is Elongator complex protein 2 (Elp2) (Rattus norvegicus (Rat)).